The primary structure comprises 713 residues: Polyribonucleotide nucleotidyltransferase (713 aa).

Mg(2+) contacts are provided by D498 and D504. The 67-residue stretch at 565 to 631 (PRILSLKVPV…RIEDLTREAK (67 aa)) folds into the KH domain. Positions 633–701 (GEIYEGTVTR…ERGKIDLIRP (69 aa)) constitute an S1 motif domain.

The protein belongs to the polyribonucleotide nucleotidyltransferase family. It depends on Mg(2+) as a cofactor.

Its subcellular location is the cytoplasm. It catalyses the reaction RNA(n+1) + phosphate = RNA(n) + a ribonucleoside 5'-diphosphate. Functionally, involved in mRNA degradation. Catalyzes the phosphorolysis of single-stranded polyribonucleotides processively in the 3'- to 5'-direction. This chain is Polyribonucleotide nucleotidyltransferase, found in Thermus thermophilus (strain ATCC 27634 / DSM 579 / HB8).